The sequence spans 155 residues: Small ribosomal subunit protein uS7cz/uS7cy (155 aa).

It belongs to the universal ribosomal protein uS7 family. Part of the 30S ribosomal subunit.

Its subcellular location is the plastid. It is found in the chloroplast. Its function is as follows. One of the primary rRNA binding proteins, it binds directly to 16S rRNA where it nucleates assembly of the head domain of the 30S subunit. The polypeptide is Small ribosomal subunit protein uS7cz/uS7cy (rps7-A) (Crucihimalaya wallichii (Rock-cress)).